The sequence spans 574 residues: 2-succinyl-5-enolpyruvyl-6-hydroxy-3-cyclohexene-1-carboxylate synthase (574 aa).

This sequence belongs to the TPP enzyme family. MenD subfamily. Homodimer. The cofactor is Mg(2+). Requires Mn(2+) as cofactor. Thiamine diphosphate serves as cofactor.

It catalyses the reaction isochorismate + 2-oxoglutarate + H(+) = 5-enolpyruvoyl-6-hydroxy-2-succinyl-cyclohex-3-ene-1-carboxylate + CO2. Its pathway is quinol/quinone metabolism; 1,4-dihydroxy-2-naphthoate biosynthesis; 1,4-dihydroxy-2-naphthoate from chorismate: step 2/7. The protein operates within cofactor biosynthesis; phylloquinone biosynthesis. Functionally, catalyzes the thiamine diphosphate-dependent decarboxylation of 2-oxoglutarate and the subsequent addition of the resulting succinic semialdehyde-thiamine pyrophosphate anion to isochorismate to yield 2-succinyl-5-enolpyruvyl-6-hydroxy-3-cyclohexene-1-carboxylate (SEPHCHC). This is 2-succinyl-5-enolpyruvyl-6-hydroxy-3-cyclohexene-1-carboxylate synthase from Synechococcus sp. (strain RCC307).